A 92-amino-acid chain; its full sequence is Small ribosomal subunit protein uS19 (92 aa).

This sequence belongs to the universal ribosomal protein uS19 family.

Functionally, protein S19 forms a complex with S13 that binds strongly to the 16S ribosomal RNA. This is Small ribosomal subunit protein uS19 from Methylocella silvestris (strain DSM 15510 / CIP 108128 / LMG 27833 / NCIMB 13906 / BL2).